A 346-amino-acid chain; its full sequence is S-adenosylmethionine:tRNA ribosyltransferase-isomerase (346 aa).

This sequence belongs to the QueA family. In terms of assembly, monomer.

It is found in the cytoplasm. The enzyme catalyses 7-aminomethyl-7-carbaguanosine(34) in tRNA + S-adenosyl-L-methionine = epoxyqueuosine(34) in tRNA + adenine + L-methionine + 2 H(+). It functions in the pathway tRNA modification; tRNA-queuosine biosynthesis. In terms of biological role, transfers and isomerizes the ribose moiety from AdoMet to the 7-aminomethyl group of 7-deazaguanine (preQ1-tRNA) to give epoxyqueuosine (oQ-tRNA). This chain is S-adenosylmethionine:tRNA ribosyltransferase-isomerase, found in Lysinibacillus sphaericus (strain C3-41).